We begin with the raw amino-acid sequence, 445 residues long: Ribosomal protein uS12 methylthiotransferase RimO (445 aa).

Residues 10-120 (PKVGFVSLGC…VVNAVHEVVP (111 aa)) form the MTTase N-terminal domain. [4Fe-4S] cluster-binding residues include C19, C55, C84, C153, C157, and C160. The Radical SAM core domain occupies 139–378 (LTPRHYAYLK…AHQQAISSAR (240 aa)). One can recognise a TRAM domain in the interval 380–445 (QLRIGREIEV…DEYDLWAEQI (66 aa)).

This sequence belongs to the methylthiotransferase family. RimO subfamily. Requires [4Fe-4S] cluster as cofactor.

It localises to the cytoplasm. It carries out the reaction L-aspartate(89)-[ribosomal protein uS12]-hydrogen + (sulfur carrier)-SH + AH2 + 2 S-adenosyl-L-methionine = 3-methylsulfanyl-L-aspartate(89)-[ribosomal protein uS12]-hydrogen + (sulfur carrier)-H + 5'-deoxyadenosine + L-methionine + A + S-adenosyl-L-homocysteine + 2 H(+). Functionally, catalyzes the methylthiolation of an aspartic acid residue of ribosomal protein uS12. The polypeptide is Ribosomal protein uS12 methylthiotransferase RimO (Pseudomonas fluorescens (strain Pf0-1)).